Reading from the N-terminus, the 1196-residue chain is DNA polymerase beta (1196 aa).

The protein belongs to the DNA polymerase type-B family.

The catalysed reaction is DNA(n) + a 2'-deoxyribonucleoside 5'-triphosphate = DNA(n+1) + diphosphate. Functionally, DNA-directed DNA polymerase involved in viral DNA replication. The polypeptide is DNA polymerase beta (African swine fever virus (isolate Pig/Kenya/KEN-50/1950) (ASFV)).